A 491-amino-acid chain; its full sequence is Probable CtpA-like serine protease (491 aa).

Residues 1-22 (MSESKDTTEVNQEVNEKASSQS) form a disordered region. Over residues 9-22 (EVNQEVNEKASSQS) the composition is skewed to polar residues. A helical transmembrane segment spans residues 34–54 (FIIILIVTILVTAMIAVFATI). Residues 119–201 (TKSFNEDVSG…TKVTLTIERG (83 aa)) enclose the PDZ domain. Active-site charge relay system residues include Ser-324, Asp-335, and Lys-349.

The protein belongs to the peptidase S41A family.

Its subcellular location is the cell membrane. The chain is Probable CtpA-like serine protease from Staphylococcus saprophyticus subsp. saprophyticus (strain ATCC 15305 / DSM 20229 / NCIMB 8711 / NCTC 7292 / S-41).